A 144-amino-acid chain; its full sequence is Large ribosomal subunit protein uL15 (144 aa).

A disordered region spans residues 1 to 60; that stretch reads MKMNTLKPAEGSKQSPKRLGRGIGSGLGKTGGRGHKGQTSRSGGTIRPGFEGGQQPLQRR. Over residues 21–31 the composition is skewed to gly residues; sequence RGIGSGLGKTG.

It belongs to the universal ribosomal protein uL15 family. Part of the 50S ribosomal subunit.

In terms of biological role, binds to the 23S rRNA. This is Large ribosomal subunit protein uL15 from Hahella chejuensis (strain KCTC 2396).